Reading from the N-terminus, the 553-residue chain is COP9 signalosome complex subunit 10 (553 aa).

The segment covering 21–46 (AEMEEDSDEMGVYEEETSQGAEEEVP) has biased composition (acidic residues). The interval 21–47 (AEMEEDSDEMGVYEEETSQGAEEEVPL) is disordered. One can recognise a PCI domain in the interval 298 to 474 (LRTHFSACLQ…DYVYFGDEPR (177 aa)).

As to quaternary structure, component of a COP9 signalosome-like (CSN) complex.

The protein localises to the cytoplasm. The protein resides in the nucleus. Component of the COP9 signalosome (CSN) complex that acts as an regulator of the ubiquitin (Ubl) conjugation pathway by mediating the deneddylation of the cullin subunit of SCF-type E3 ubiquitin-protein ligase complexes. The CSN complex is involved in the regulation of the mating pheromone response. The chain is COP9 signalosome complex subunit 10 (RRI2) from Eremothecium gossypii (strain ATCC 10895 / CBS 109.51 / FGSC 9923 / NRRL Y-1056) (Yeast).